The following is a 312-amino-acid chain: MEVKNCCMVTEFILLGIPHTEGLEMTLFVLFLPFYACTLLGNVSILVAVMSSARLHTPMYFFLGNLSVFDMGFSSVTCPKMLLYLMGLSRLISYKDCVCQLFFFHFLGSIECFLFTVMAYDRFTAICYPLRYTVIMNPRICVALAVGTWLLGCIHSSILTSLTFTLPYCGPNEVDHFFCDIPALLPLACADTSLAQRVSFTNVGLISLVCFLLILLSYTRITISILSIRTTEGRRRAFSTCSAHLIAILCAYGPIITVYLQPTPNPMLGTVVQILMNLVGPMLNPLIYTLRNKEVKTALKTILHRTGHVPES.

Over 1 to 26 (MEVKNCCMVTEFILLGIPHTEGLEMT) the chain is Extracellular. Residues 27-47 (LFVLFLPFYACTLLGNVSILV) form a helical membrane-spanning segment. Residues 48 to 57 (AVMSSARLHT) are Cytoplasmic-facing. The helical transmembrane segment at 58 to 78 (PMYFFLGNLSVFDMGFSSVTC) threads the bilayer. Over 79 to 97 (PKMLLYLMGLSRLISYKDC) the chain is Extracellular. Cys97 and Cys179 are oxidised to a cystine. Residues 98-118 (VCQLFFFHFLGSIECFLFTVM) form a helical membrane-spanning segment. Topologically, residues 119–139 (AYDRFTAICYPLRYTVIMNPR) are cytoplasmic. Residues 140–160 (ICVALAVGTWLLGCIHSSILT) traverse the membrane as a helical segment. Residues 161 to 197 (SLTFTLPYCGPNEVDHFFCDIPALLPLACADTSLAQR) lie on the Extracellular side of the membrane. Residues 198–218 (VSFTNVGLISLVCFLLILLSY) form a helical membrane-spanning segment. The Cytoplasmic segment spans residues 219–239 (TRITISILSIRTTEGRRRAFS). A helical membrane pass occupies residues 240–260 (TCSAHLIAILCAYGPIITVYL). Topologically, residues 261–266 (QPTPNP) are extracellular. A helical membrane pass occupies residues 267 to 287 (MLGTVVQILMNLVGPMLNPLI). Topologically, residues 288–312 (YTLRNKEVKTALKTILHRTGHVPES) are cytoplasmic.

Belongs to the G-protein coupled receptor 1 family.

Its subcellular location is the cell membrane. Functionally, odorant receptor. This is Olfactory receptor 10D3 from Homo sapiens (Human).